Here is a 168-residue protein sequence, read N- to C-terminus: Phosphopantetheine adenylyltransferase (168 aa).

Position 11 (Thr-11) interacts with substrate. ATP is bound by residues 11–12 and His-19; that span reads TF. Positions 43, 75, and 89 each coordinate substrate. Residues 90 to 92, Glu-100, and 125 to 131 each bind ATP; these read GIR and WSYMSSS.

Belongs to the bacterial CoaD family. As to quaternary structure, homohexamer. Mg(2+) serves as cofactor.

It is found in the cytoplasm. The catalysed reaction is (R)-4'-phosphopantetheine + ATP + H(+) = 3'-dephospho-CoA + diphosphate. It functions in the pathway cofactor biosynthesis; coenzyme A biosynthesis; CoA from (R)-pantothenate: step 4/5. Its function is as follows. Reversibly transfers an adenylyl group from ATP to 4'-phosphopantetheine, yielding dephospho-CoA (dPCoA) and pyrophosphate. This chain is Phosphopantetheine adenylyltransferase, found in Wigglesworthia glossinidia brevipalpis.